Here is a 455-residue protein sequence, read N- to C-terminus: tRNA modification GTPase MnmE (455 aa).

Positions 24, 81, and 120 each coordinate (6S)-5-formyl-5,6,7,8-tetrahydrofolate. Residues 216 to 378 (GMTVVIAGRP…LREHLKACMG (163 aa)) form the TrmE-type G domain. Asn-226 is a K(+) binding site. Residues 226-231 (NAGKSS), 245-251 (TDIAGTT), 270-273 (DTAG), 335-338 (NKAD), and 359-361 (SAR) each bind GTP. Ser-230 serves as a coordination point for Mg(2+). Positions 245, 247, and 250 each coordinate K(+). Thr-251 serves as a coordination point for Mg(2+). Residue Lys-455 coordinates (6S)-5-formyl-5,6,7,8-tetrahydrofolate.

The protein belongs to the TRAFAC class TrmE-Era-EngA-EngB-Septin-like GTPase superfamily. TrmE GTPase family. In terms of assembly, homodimer. Heterotetramer of two MnmE and two MnmG subunits. Requires K(+) as cofactor.

It is found in the cytoplasm. Functionally, exhibits a very high intrinsic GTPase hydrolysis rate. Involved in the addition of a carboxymethylaminomethyl (cmnm) group at the wobble position (U34) of certain tRNAs, forming tRNA-cmnm(5)s(2)U34. The protein is tRNA modification GTPase MnmE of Pseudomonas aeruginosa (strain ATCC 15692 / DSM 22644 / CIP 104116 / JCM 14847 / LMG 12228 / 1C / PRS 101 / PAO1).